The chain runs to 580 residues: Multidrug resistance-like ATP-binding protein MdlB (580 aa).

Residues 25-310 (IILAFFLLLS…ITIQQSILQQ (286 aa)) enclose the ABC transmembrane type-1 domain. A run of 5 helical transmembrane segments spans residues 26–46 (ILAF…PILI), 61–81 (FQLI…AVFF), 142–162 (VGPT…AMFT), 165–185 (WHMA…MSIY), and 258–278 (LLSA…SIGV). The ABC transporter domain occupies 341-575 (INIKNLSFKY…KGFYWKMYNF (235 aa)). ATP is bound at residue 375–382 (GQTGSGKS).

It belongs to the ABC transporter superfamily. Drug exporter-2 (TC 3.A.1.117) family.

It is found in the cell membrane. The enzyme catalyses ATP + H2O + xenobioticSide 1 = ADP + phosphate + xenobioticSide 2.. In Buchnera aphidicola subsp. Schizaphis graminum (strain Sg), this protein is Multidrug resistance-like ATP-binding protein MdlB (mdlB).